Reading from the N-terminus, the 183-residue chain is Probable chorismate pyruvate-lyase 2 (183 aa).

Residues arginine 76, leucine 114, and glutamate 166 each coordinate substrate.

This sequence belongs to the UbiC family.

The protein resides in the cytoplasm. The catalysed reaction is chorismate = 4-hydroxybenzoate + pyruvate. Its pathway is cofactor biosynthesis; ubiquinone biosynthesis. Removes the pyruvyl group from chorismate, with concomitant aromatization of the ring, to provide 4-hydroxybenzoate (4HB) for the ubiquinone pathway. This chain is Probable chorismate pyruvate-lyase 2, found in Pseudomonas fluorescens (strain Pf0-1).